Here is a 295-residue protein sequence, read N- to C-terminus: Adrenocorticotropic hormone receptor (295 aa).

Residues 1-23 lie on the Extracellular side of the membrane; the sequence is MRHILNLYENINSTARNNSDCPA. Asn12 and Asn17 each carry an N-linked (GlcNAc...) asparagine glycan. Disulfide bonds link Cys21-Cys253 and Cys245-Cys251. The chain crosses the membrane as a helical span at residues 24 to 49; that stretch reads VILPEEIFFTVSIVGVLENLMVLLAV. Topologically, residues 50–58 are cytoplasmic; the sequence is AKNKSLQSP. Residues 59–79 form a helical membrane-spanning segment; it reads MYFFICSLAISDMLGSLYKIL. Residues 80–104 lie on the Extracellular side of the membrane; sequence ENVLIMFRNMGYLEPRGSFESTADD. The chain crosses the membrane as a helical span at residues 105-126; it reads VVDSLFILSLLGSICSLSVIAA. The Cytoplasmic portion of the chain corresponds to 127 to 147; that stretch reads DRYITIFHALQYHSIVTMHRA. Residues 148 to 168 form a helical membrane-spanning segment; that stretch reads LVVLTVLWAGCTGSGITIVTF. Residues 169–180 are Extracellular-facing; that stretch reads SHHVPTVIAFTA. The chain crosses the membrane as a helical span at residues 181–199; it reads LFPLMLAFILCLYVHMFLL. At 200–217 the chain is on the cytoplasmic side; it reads ARSHARRTSSLPKANMRG. A helical membrane pass occupies residues 218–244; it reads AITLTVLLGVFIFCWAPFVLHVLLMTF. The Extracellular segment spans residues 245 to 256; sequence CPADPYCACYMS. Residues 257–278 traverse the membrane as a helical segment; the sequence is LFQVNGVLIMCNAVIDPFIYAF. Over 279 to 295 the chain is Cytoplasmic; that stretch reads RSPELRVAFKKMVICNW. A lipid anchor (S-palmitoyl cysteine) is attached at Cys293.

The protein belongs to the G-protein coupled receptor 1 family. As to quaternary structure, homodimer. Interacts with corticotropin (ACTH). Interacts with MRAP; this interaction targets MC2R to the plasma membrane. Interacts with MRAP2; competing with MRAP for binding to MC2R and impairing the binding of corticotropin (ACTH). Ubiquitinated by MGRN1 that may be involved in post-endocytic trafficking and/or degradation of internalized receptor.

The protein localises to the cell membrane. In terms of biological role, hormone receptor primarily expressed in adrenal cortex that plays a key role in regulating adrenocortical function. Upon corticotropin (ACTH) binding, facilitates the release of adrenal glucocorticoids, including cortisol and corticosterone. In addition, MC2R is required for fetal and neonatal adrenal gland development. Mechanistically, activates adenylate cyclase (cAMP), the MAPK cascade as well as the cAMP-dependent protein kinase A pathway leading to steroidogenic factor 1/NR5A1-mediated transcriptional activation. The sequence is that of Adrenocorticotropic hormone receptor (MC2R) from Ovis aries (Sheep).